A 532-amino-acid polypeptide reads, in one-letter code: Probable cytochrome c oxidase subunit 1 (532 aa).

Helical transmembrane passes span 33-53 (IMYIIFAVFAGIVGGLFSLLF), 74-94 (VLITAHAVIMVFFMIMPALFG), 95-115 (GFGNYFVPLLIGAPDMAFPRL), 118-138 (ISFWLLVTAFILLMGSAFVDG), 163-183 (MAIFSLHLTGLSSILGSINLI), 200-220 (PLFVWSILVTAFLIILAMPVL), 252-272 (LFWFFGHPEVYIVILPGFGIV), and 284-304 (IFGYQGMVGAMVIIGFVGFIV). Position 79 (His79) interacts with Fe(II)-heme a. His258 and Tyr262 together coordinate Cu cation. Cu cation contacts are provided by His307 and His308. The next 2 membrane-spanning stretches (helical) occupy residues 318 to 338 (ALIYFTAGTMIIAVPTGIKIF) and 355 to 375 (MLFSIGFIILFTIGGVTGIIL). His393 is a binding site for heme a3. 3 helical membrane passes run 394–414 (FHYTMSLGALFTAFAGFYYWF), 431–451 (FWITFIGVNLTFFPQHFLGLA), and 473–493 (IGAGISMAAALYFVFIVFYTL). Fe(II)-heme a is bound at residue His395.

It belongs to the heme-copper respiratory oxidase family.

It is found in the cell membrane. The catalysed reaction is 4 Fe(II)-[cytochrome c] + O2 + 8 H(+)(in) = 4 Fe(III)-[cytochrome c] + 2 H2O + 4 H(+)(out). Its pathway is energy metabolism; oxidative phosphorylation. Its function is as follows. Cytochrome c oxidase is the component of the respiratory chain that catalyzes the reduction of oxygen to water. Subunits 1-3 form the functional core of the enzyme complex. CO I is the catalytic subunit of the enzyme. Electrons originating in cytochrome c are transferred via the copper A center of subunit 2 and heme A of subunit 1 to the bimetallic center formed by heme A3 and copper B. The sequence is that of Probable cytochrome c oxidase subunit 1 (ctaD) from Rickettsia felis (strain ATCC VR-1525 / URRWXCal2) (Rickettsia azadi).